We begin with the raw amino-acid sequence, 560 residues long: MASPVLLLKEGTSRTTGRDALRNNILAAKTLAEMLRSSLGPKGLDKMLIDSFGDVTITNDGATIVKDMEIQHPAAKLLVEAAKAQDAEVGDGTTSAVVLAGALLEKAESLLDQNIHPTIIIEGYKKAYTKALELLPQLGTRIDIRDLNSSVARDTLRKIAFTTLASKFIAEGAELNKIIDMVIDAIVNVAEPLPNGGYNVSLDLIKIDKKKGGSIEDSVLVKGLVLDKEVVHPGMPRRVTKAKIAVLDAALEVEKPEISAKISITSPEQIKAFLDEESKYLKDMVDKLASIGANVVICQKGIDDIAQHFLAKKGILAVRRVKRSDIEKLEKALGARIISSIKDATPDDLGYAELVEERRVGNDKMVFIEGAKNLKAVNILLRGSNDMALDEAERSINDALHALRNILLEPVILPGGGAIELELAMKLREYARSVGGKEQLAIEAFADALEEIPMILAETAGLEAISALMDLRARHAKGLTNTGVDVIGGKIVDDVYALNIIEPIRVKAQVLKSATEAATAILKIDDLIAAAPLKSEKKGGEGSKEESGGEGGAGTPSLGD.

The span at 535-547 shows a compositional bias: basic and acidic residues; the sequence is SEKKGGEGSKEES. A disordered region spans residues 535-560; that stretch reads SEKKGGEGSKEESGGEGGAGTPSLGD.

The protein belongs to the TCP-1 chaperonin family. In terms of assembly, forms a heterooligomeric complex of two stacked nine-membered rings; one of alpha and the other of beta subunits. Sometimes called a 'rosettasome'.

It localises to the cytoplasm. The catalysed reaction is ATP + H2O = ADP + phosphate + H(+). In terms of biological role, molecular chaperone; binds unfolded polypeptides in vitro, stimulates protein folding and has ATPase activity. One of the most abundant proteins in the cell at all temperatures. The protein is Thermosome subunit alpha (thsA) of Saccharolobus shibatae (strain ATCC 51178 / DSM 5389 / JCM 8931 / NBRC 15437 / B12) (Sulfolobus shibatae).